The sequence spans 509 residues: Cytochrome P450 monooxygenase CYP512U6 (509 aa).

A helical transmembrane segment spans residues 12–29; the sequence is VFACVAVVIAIYAVRWYT. Cys-446 lines the heme pocket.

Belongs to the cytochrome P450 family. The cofactor is heme.

The protein resides in the membrane. It catalyses the reaction ganoderate DM + reduced [NADPH--hemoprotein reductase] + O2 = hainanate A + oxidized [NADPH--hemoprotein reductase] + H2O + H(+). The catalysed reaction is ganoderate TR + reduced [NADPH--hemoprotein reductase] + O2 = ganoderate Jc + oxidized [NADPH--hemoprotein reductase] + H2O + H(+). Its pathway is secondary metabolite biosynthesis; terpenoid biosynthesis. Functionally, cytochrome P450 monooxygenase that hydroxylates the ganoderic acids DM and TR at the C-23 position to produce hainanic acid A and ganoderic acid Jc, respectively. This Ganoderma lucidum (Ling zhi medicinal fungus) protein is Cytochrome P450 monooxygenase CYP512U6.